Reading from the N-terminus, the 316-residue chain is Taste receptor type 2 member 109 (316 aa).

Residues 1–14 lie on the Extracellular side of the membrane; sequence MEHLLKRTFDITEN. The helical transmembrane segment at 15-35 threads the bilayer; that stretch reads ILLIILFIELIIGLIGNGFTA. At 36 to 62 the chain is on the cytoplasmic side; the sequence is LVHCMDWVKRKKMSLVNKILTALATSR. A helical transmembrane segment spans residues 63–83; the sequence is IFLLWFMLVGFPISSLYPYLV. Topologically, residues 84 to 94 are extracellular; it reads TTRLMIQFTST. Residues 95 to 115 traverse the membrane as a helical segment; sequence LWTIANHISVWFATCLSVFYF. At 116 to 135 the chain is on the cytoplasmic side; the sequence is LKIANFSNSPFLYLKRRVEK. A helical transmembrane segment spans residues 136-156; that stretch reads VVSVTLLVSLVLLFLNILLLN. At 157 to 191 the chain is on the extracellular side; it reads LEINMCINEYHQINISYIFISYYHLSCQIQVLGSH. N-linked (GlcNAc...) asparagine glycosylation is present at Asn170. A helical transmembrane segment spans residues 192–212; that stretch reads IIFLSVPVVLSLSTFLLLIFS. Residues 213-241 lie on the Cytoplasmic side of the membrane; it reads LWTLHKRMQQHVQGGRDARTTAHFKALQA. A helical membrane pass occupies residues 242-262; that stretch reads VIAFLLLYSIFILSLLLQFWI. At 263 to 270 the chain is on the extracellular side; the sequence is HGLRKKPP. The chain crosses the membrane as a helical span at residues 271–291; sequence FIAFCQVVDTAFPSFHSYVLI. Topologically, residues 292 to 316 are cytoplasmic; that stretch reads LRDRKLRHASLSVLSWLKCRPNYVK.

The protein belongs to the G-protein coupled receptor T2R family.

It is found in the membrane. Putative taste receptor which may play a role in the perception of bitterness. The polypeptide is Taste receptor type 2 member 109 (Mus musculus (Mouse)).